We begin with the raw amino-acid sequence, 360 residues long: Aminomethyltransferase (360 aa).

It belongs to the GcvT family. The glycine cleavage system is composed of four proteins: P, T, L and H.

The catalysed reaction is N(6)-[(R)-S(8)-aminomethyldihydrolipoyl]-L-lysyl-[protein] + (6S)-5,6,7,8-tetrahydrofolate = N(6)-[(R)-dihydrolipoyl]-L-lysyl-[protein] + (6R)-5,10-methylene-5,6,7,8-tetrahydrofolate + NH4(+). Functionally, the glycine cleavage system catalyzes the degradation of glycine. The polypeptide is Aminomethyltransferase (Legionella pneumophila (strain Lens)).